Consider the following 136-residue polypeptide: Holo-[acyl-carrier-protein] synthase (136 aa).

The Mg(2+) site is built by Asp-8 and Glu-57.

Belongs to the P-Pant transferase superfamily. AcpS family. Requires Mg(2+) as cofactor.

It is found in the cytoplasm. It carries out the reaction apo-[ACP] + CoA = holo-[ACP] + adenosine 3',5'-bisphosphate + H(+). Transfers the 4'-phosphopantetheine moiety from coenzyme A to a Ser of acyl-carrier-protein. The chain is Holo-[acyl-carrier-protein] synthase from Methylorubrum populi (strain ATCC BAA-705 / NCIMB 13946 / BJ001) (Methylobacterium populi).